The following is a 672-amino-acid chain: Outer dynein arm-docking complex subunit 4 (672 aa).

TPR repeat units lie at residues 13–46 (FPSY…QDGD), 48–80 (NCLV…DPAF), 81–114 (CKGI…RPDR), 275–311 (LKSL…NKEE), 320–353 (GNLY…AKEY), 360–393 (SRAL…AKTT), 397–430 (TWLF…AEEE), and 437–470 (LNAS…AKLV). Residues 527-544 (RVRDEPEKVVKQWDHSED) show a composition bias toward basic and acidic residues. The tract at residues 527 to 672 (RVRDEPEKVV…TGNEMEKEYE (146 aa)) is disordered. The segment covering 545–555 (EKETDEDDEAF) has biased composition (acidic residues). Composition is skewed to basic and acidic residues over residues 595 to 650 (ETGR…EELG) and 658 to 672 (GETK…KEYE).

Component of the outer dynein arm-docking complex along with ODAD1, ODAD2 and ODAD3. Interacts with ODAD1; this interaction may facilitate the recruitment and/or attachment of outer dynein arm docking complex proteins, including ODAD1, ODAD3 and ODAD2, to ciliary axonemes. Interacts with components of the IFT complex A, including IFT140, TTC21B/IFT139 and WDR19/IFT144, and the IFT complex B, including IFT46, IFT52 and IFT57. Interacts with CFAP53. Expressed in the nasal mucosa (at protein level).

It localises to the cytoplasm. The protein localises to the cytoskeleton. It is found in the cilium axoneme. Component of the outer dynein arm-docking complex (ODA-DC) that mediates outer dynein arms (ODA) binding onto the doublet microtubule. Plays an essential role for the assembly of ODA-DC and for the docking of ODA in ciliary axoneme. This is Outer dynein arm-docking complex subunit 4 from Homo sapiens (Human).